The chain runs to 609 residues: UvrABC system protein C (609 aa).

Residues 16 to 94 (SSAGVYRMYD…IKQYMPKYNV (79 aa)) enclose the GIY-YIG domain. The 36-residue stretch at 203–238 (QQVISALVDKMELAAERQAYEQAARFRDQIMALRKV) folds into the UVR domain.

Belongs to the UvrC family. As to quaternary structure, interacts with UvrB in an incision complex.

Its subcellular location is the cytoplasm. Its function is as follows. The UvrABC repair system catalyzes the recognition and processing of DNA lesions. UvrC both incises the 5' and 3' sides of the lesion. The N-terminal half is responsible for the 3' incision and the C-terminal half is responsible for the 5' incision. In Shewanella baltica (strain OS195), this protein is UvrABC system protein C.